We begin with the raw amino-acid sequence, 64 residues long: Large ribosomal subunit protein bL35 (64 aa).

This sequence belongs to the bacterial ribosomal protein bL35 family.

In Desulforudis audaxviator (strain MP104C), this protein is Large ribosomal subunit protein bL35.